We begin with the raw amino-acid sequence, 73 residues long: Gastricsin (73 aa).

Residues 1 to 43 (SVIKVPLKKLKSIRQAMKEKGLLEEFLKTHKYDPAQRYRIGDI) constitute a propeptide, activation peptide. The 17-residue stretch at 57–73 (YFGEISIGTPPQNFLVL) folds into the Peptidase A1 domain.

It belongs to the peptidase A1 family.

The protein localises to the secreted. The enzyme catalyses More restricted specificity than pepsin A, but shows preferential cleavage at Tyr-|-Xaa bonds. High activity on hemoglobin.. In terms of biological role, hydrolyzes a variety of proteins. The sequence is that of Gastricsin (PGC) from Sus scrofa (Pig).